Here is a 223-residue protein sequence, read N- to C-terminus: Holliday junction branch migration complex subunit RuvA (223 aa).

Residues 1–64 are domain I; that stretch reads MIGKLTGRLD…EDLLQLFGFL (64 aa). Residues 65 to 143 form a domain II region; that stretch reads SPYEKEWHRL…AVMAMGGTLD (79 aa). The flexible linker stretch occupies residues 144-171; that stretch reads DAMDDVVDDMPGESAAPAPAPQPRAPKR. Positions 148–177 are disordered; the sequence is DVVDDMPGESAAPAPAPQPRAPKRPASNAQ. Positions 172-223 are domain III; it reads PASNAQAEALSALQNLGYGPSDAAQAVAQAAESASNTPELIRAALRLLAPKE.

Belongs to the RuvA family. In terms of assembly, homotetramer. Forms an RuvA(8)-RuvB(12)-Holliday junction (HJ) complex. HJ DNA is sandwiched between 2 RuvA tetramers; dsDNA enters through RuvA and exits via RuvB. An RuvB hexamer assembles on each DNA strand where it exits the tetramer. Each RuvB hexamer is contacted by two RuvA subunits (via domain III) on 2 adjacent RuvB subunits; this complex drives branch migration. In the full resolvosome a probable DNA-RuvA(4)-RuvB(12)-RuvC(2) complex forms which resolves the HJ.

Its subcellular location is the cytoplasm. Its function is as follows. The RuvA-RuvB-RuvC complex processes Holliday junction (HJ) DNA during genetic recombination and DNA repair, while the RuvA-RuvB complex plays an important role in the rescue of blocked DNA replication forks via replication fork reversal (RFR). RuvA specifically binds to HJ cruciform DNA, conferring on it an open structure. The RuvB hexamer acts as an ATP-dependent pump, pulling dsDNA into and through the RuvAB complex. HJ branch migration allows RuvC to scan DNA until it finds its consensus sequence, where it cleaves and resolves the cruciform DNA. The protein is Holliday junction branch migration complex subunit RuvA of Jannaschia sp. (strain CCS1).